A 225-amino-acid polypeptide reads, in one-letter code: UPF0758 protein SZO_09140 (225 aa).

The 123-residue stretch at 102-224 folds into the MPN domain; it reads PVLSSAQVAE…YYSFREKSDL (123 aa). Zn(2+) is bound by residues His173, His175, and Asp186. Residues 173–186 carry the JAMM motif motif; that stretch reads HNHPSGLTKPSAND.

Belongs to the UPF0758 family.

The chain is UPF0758 protein SZO_09140 from Streptococcus equi subsp. zooepidemicus (strain H70).